A 254-amino-acid chain; its full sequence is Type III pantothenate kinase (254 aa).

Residue 7–14 (DIGNTRLK) participates in ATP binding. Substrate contacts are provided by residues Tyr-97 and 104–107 (GSDR). Residue Asp-106 is the Proton acceptor of the active site. Position 134 (Thr-134) interacts with ATP. Thr-184 provides a ligand contact to substrate.

This sequence belongs to the type III pantothenate kinase family. As to quaternary structure, homodimer. NH4(+) is required as a cofactor. The cofactor is K(+).

The protein localises to the cytoplasm. The catalysed reaction is (R)-pantothenate + ATP = (R)-4'-phosphopantothenate + ADP + H(+). It participates in cofactor biosynthesis; coenzyme A biosynthesis; CoA from (R)-pantothenate: step 1/5. Functionally, catalyzes the phosphorylation of pantothenate (Pan), the first step in CoA biosynthesis. The chain is Type III pantothenate kinase from Methylibium petroleiphilum (strain ATCC BAA-1232 / LMG 22953 / PM1).